The sequence spans 74 residues: Benzylsuccinate synthase beta subunit (74 aa).

Heterohexamer composed of 2 alpha subunits, 2 beta subunits and 2 gamma subunits.

The enzyme catalyses toluene + fumarate = 2-benzylsuccinate. It participates in xenobiotic degradation; toluene degradation. Activated by the benzylsuccinate synthase activating enzyme BssD. Rapidly inactivated by oxygen. Its function is as follows. Catalyzes the addition of fumarate to the methyl group of toluene, leading to the formation of benzylsuccinate. In Thauera aromatica, this protein is Benzylsuccinate synthase beta subunit (bssB).